Here is a 338-residue protein sequence, read N- to C-terminus: Glycerol-3-phosphate dehydrogenase [NAD(P)+] (338 aa).

The NADPH site is built by Ser-11, Trp-12, His-32, His-33, and Lys-109. Residues Lys-109, Gly-140, and Ser-142 each contribute to the sn-glycerol 3-phosphate site. NADPH is bound at residue Ala-144. Residues Lys-195, Asp-248, Ser-258, Arg-259, and Asn-260 each contribute to the sn-glycerol 3-phosphate site. Catalysis depends on Lys-195, which acts as the Proton acceptor. An NADPH-binding site is contributed by Arg-259. Residues Val-283 and Glu-285 each coordinate NADPH.

The protein belongs to the NAD-dependent glycerol-3-phosphate dehydrogenase family.

It localises to the cytoplasm. It catalyses the reaction sn-glycerol 3-phosphate + NAD(+) = dihydroxyacetone phosphate + NADH + H(+). The enzyme catalyses sn-glycerol 3-phosphate + NADP(+) = dihydroxyacetone phosphate + NADPH + H(+). Its pathway is membrane lipid metabolism; glycerophospholipid metabolism. Its function is as follows. Catalyzes the reduction of the glycolytic intermediate dihydroxyacetone phosphate (DHAP) to sn-glycerol 3-phosphate (G3P), the key precursor for phospholipid synthesis. The sequence is that of Glycerol-3-phosphate dehydrogenase [NAD(P)+] from Leuconostoc citreum (strain KM20).